We begin with the raw amino-acid sequence, 802 residues long: Leucine--tRNA ligase (802 aa).

The 'HIGH' region signature appears at 40–51 (PYPSGAGLHVGH). Positions 576–580 (KMSKS) match the 'KMSKS' region motif. An ATP-binding site is contributed by K579.

The protein belongs to the class-I aminoacyl-tRNA synthetase family.

The protein localises to the cytoplasm. The catalysed reaction is tRNA(Leu) + L-leucine + ATP = L-leucyl-tRNA(Leu) + AMP + diphosphate. This Bacillus anthracis (strain A0248) protein is Leucine--tRNA ligase.